Reading from the N-terminus, the 625-residue chain is Phosphomethylpyrimidine synthase (625 aa).

Substrate is bound by residues Asn230, Met259, Tyr288, His324, 344-346 (SRG), 385-388 (DGLR), and Glu424. Residue His428 coordinates Zn(2+). Tyr451 contributes to the substrate binding site. His492 contacts Zn(2+). Positions 572, 575, and 580 each coordinate [4Fe-4S] cluster.

It belongs to the ThiC family. In terms of assembly, homodimer. It depends on [4Fe-4S] cluster as a cofactor.

It carries out the reaction 5-amino-1-(5-phospho-beta-D-ribosyl)imidazole + S-adenosyl-L-methionine = 4-amino-2-methyl-5-(phosphooxymethyl)pyrimidine + CO + 5'-deoxyadenosine + formate + L-methionine + 3 H(+). It participates in cofactor biosynthesis; thiamine diphosphate biosynthesis. Catalyzes the synthesis of the hydroxymethylpyrimidine phosphate (HMP-P) moiety of thiamine from aminoimidazole ribotide (AIR) in a radical S-adenosyl-L-methionine (SAM)-dependent reaction. The protein is Phosphomethylpyrimidine synthase of Xanthomonas euvesicatoria pv. vesicatoria (strain 85-10) (Xanthomonas campestris pv. vesicatoria).